The sequence spans 342 residues: Ferredoxin--NADP reductase (342 aa).

FAD is bound by residues Cys17, Asp36, Gln44, Tyr49, Val89, Phe124, Asp289, and Thr330.

Belongs to the ferredoxin--NADP reductase type 2 family. Homodimer. FAD is required as a cofactor.

It carries out the reaction 2 reduced [2Fe-2S]-[ferredoxin] + NADP(+) + H(+) = 2 oxidized [2Fe-2S]-[ferredoxin] + NADPH. The sequence is that of Ferredoxin--NADP reductase from Bradyrhizobium sp. (strain BTAi1 / ATCC BAA-1182).